Consider the following 483-residue polypeptide: MEEAATLQSLSISSSSPFPNNSSPVVTAANTISTSESDMFRAPVNRMMRTLDRSFFKKTVPLSAATIFDKQSIGSIKSELLQSQDLLLANRIIPVRAAREGPLENVTDHWYGRKDGKQDGRKCLLLREGIKADDVTTWSPTIQKLVEAKSVEVRPFNLLLDYDYFTYTHFNLREQYLPYKYLLGEILRDKHPQARTVINKTDDVGSHSEFRTFSYEVLAGEDDMLVTVHEQDCEYSFDYSKVYWNTRLATEHERMVSRFKKGEAVCDVMAGVGPFSIPAGKKQVFVWANDLNPYGYECLERGAAKNKVREFVKAHNMNGRDFIRFATERLYQGNPRTVVHRTKVPKAERENSPIRQRKPKAFDTEYLTCPRTFDHFVMNLPATAIEFLDAFRGLYAGMQELFEPYTDRKLPLIHVYCFSTNSEDEALERKDICERISERLGFKITPEDEGRELEIRSVRLVSPTKKMFCASFRLPAEVAFKKA.

Residues 1–24 form a disordered region; sequence MEEAATLQSLSISSSSPFPNNSSP. The span at 9–24 shows a compositional bias: low complexity; the sequence is SLSISSSSPFPNNSSP. Residues His-252, 290–291, and Asn-379 each bind S-adenosyl-L-methionine; that span reads DL.

It belongs to the class I-like SAM-binding methyltransferase superfamily. TRM5/TYW2 family. In terms of assembly, monomer.

The protein localises to the mitochondrion matrix. Its subcellular location is the nucleus. The protein resides in the cytoplasm. The catalysed reaction is guanosine(37) in tRNA + S-adenosyl-L-methionine = N(1)-methylguanosine(37) in tRNA + S-adenosyl-L-homocysteine + H(+). In terms of biological role, specifically methylates the N1 position of guanosine-37 in various cytoplasmic and mitochondrial tRNAs. Methylation is not dependent on the nature of the nucleoside 5' of the target nucleoside. This is the first step in the biosynthesis of wybutosine (yW), a modified base adjacent to the anticodon of tRNAs and required for accurate decoding. The chain is tRNA (guanine(37)-N(1))-methyltransferase from Ajellomyces capsulatus (strain G186AR / H82 / ATCC MYA-2454 / RMSCC 2432) (Darling's disease fungus).